A 306-amino-acid chain; its full sequence is MADLRDEKGNPIQLTDQHGNPVQLTDEYGNPVHITGVATTGATTGHHDHGVGGASHGGVGSTGLGGVAGAAGLAGATAAAATHGGSHGGTGTHGVGPTGVGAAHGGTGTTTGLGTGTGTTGQTHGMGPTGIGGTHGVGSTGIGGAHGGTGVLGQTHGMGPTGTGAAHGGLGTGQSGLGSSYATHGGLGTGIGTGSAPASAGSHSHAPEKKTALGEQLHRSNSSSSSSEDDGQGGRRKKGFTTKIKEKLGGGKHKKDEHTTVATTKTTTAAHPGGAAVAVEHHEHEKKSMLDKIKDKLPGHHSPTSH.

Disordered stretches follow at residues 1–57 (MADL…ASHG), 80–171 (AATH…GGLG), and 188–306 (GTGI…PTSH). The span at 12-23 (IQLTDQHGNPVQ) shows a compositional bias: polar residues. Positions 32 to 44 (VHITGVATTGATT) are enriched in low complexity. Gly residues-rich tracts occupy residues 85-119 (GSHG…GTGT), 127-151 (GPTG…GTGV), and 159-171 (GPTG…GGLG). Residues 194-204 (GSAPASAGSHS) show a composition bias toward low complexity. Basic and acidic residues-rich tracts occupy residues 205-218 (HAPE…EQLH) and 243-259 (KIKE…DEHT). The segment covering 260–278 (TVATTKTTTAAHPGGAAVA) has biased composition (low complexity). Residues 279-298 (VEHHEHEKKSMLDKIKDKLP) are compositionally biased toward basic and acidic residues.

Belongs to the plant dehydrin family.

In Daucus carota (Wild carrot), this protein is Embryogenic cell protein 40 (ECP40).